We begin with the raw amino-acid sequence, 169 residues long: Disulfide bond formation protein B (169 aa).

The Cytoplasmic portion of the chain corresponds to 1 to 13 (MSQLQQFCHNRFS). The helical transmembrane segment at 14–30 (WGLLLLSAIGLELAALF) threads the bilayer. At 31–48 (FQYGMDLAPCVMCIYIRV) the chain is on the periplasmic side. Cys-40 and Cys-43 are oxidised to a cystine. A helical membrane pass occupies residues 49–64 (AVLGIILAALIGILQP). Residues 65-71 (KVWLLRL) are Cytoplasmic-facing. The chain crosses the membrane as a helical span at residues 72 to 89 (VGMAGWAVSAVWGFKLAY). The Periplasmic segment spans residues 90-144 (ELNQMQVNPSPFATCSFYPEFPSFMPLDTWLPSVFSPTGMCSDSPWSWLSVSMAQ). The cysteines at positions 104 and 130 are disulfide-linked. The helical transmembrane segment at 145–163 (WMMLGFAIYGVIWLLMLLP) threads the bilayer. Residues 164 to 169 (ALKSAK) lie on the Cytoplasmic side of the membrane.

Belongs to the DsbB family.

It is found in the cell inner membrane. Functionally, required for disulfide bond formation in some periplasmic proteins. Acts by oxidizing the DsbA protein. This is Disulfide bond formation protein B from Shewanella frigidimarina (strain NCIMB 400).